A 138-amino-acid chain; its full sequence is Basic phospholipase A2 Sct-N6 (138 aa).

An N-terminal signal peptide occupies residues 1 to 16; that stretch reads MRTFWIVAVLLVGVEG. 7 cysteine pairs are disulfide-bonded: C42/C131, C44/C60, C59/C111, C65/C138, C66/C104, C73/C97, and C91/C102. Ca(2+)-binding residues include Y43, G45, and G47. Residue H63 is part of the active site. D64 is a binding site for Ca(2+). D105 is a catalytic residue.

Belongs to the phospholipase A2 family. Group II subfamily. D49 sub-subfamily. The cofactor is Ca(2+). Expressed by the venom gland.

Its subcellular location is the secreted. The enzyme catalyses a 1,2-diacyl-sn-glycero-3-phosphocholine + H2O = a 1-acyl-sn-glycero-3-phosphocholine + a fatty acid + H(+). Functionally, snake venom phospholipase A2 (PLA2) that displays edema-inducing activities, as well as presynaptic neurotoxicity and low myotoxicity. PLA2 catalyzes the calcium-dependent hydrolysis of the 2-acyl groups in 3-sn-phosphoglycerides. This Sistrurus tergeminus (Western massasauga) protein is Basic phospholipase A2 Sct-N6.